The sequence spans 303 residues: Ribosomal large subunit pseudouridine synthase C (303 aa).

The S4 RNA-binding domain maps to 11–70 (SRLDKYLKRLYPLLTQGVIEKALRQKQITVNAQKAEASLRVKGGDKIFINDKFNLPVKQP). Aspartate 140 is an active-site residue.

It belongs to the pseudouridine synthase RluA family.

The catalysed reaction is uridine(955/2504/2580) in 23S rRNA = pseudouridine(955/2504/2580) in 23S rRNA. In terms of biological role, responsible for synthesis of pseudouridine from uracil at positions 955, 2504 and 2580 in 23S ribosomal RNA. This is Ribosomal large subunit pseudouridine synthase C (rluC) from Rickettsia conorii (strain ATCC VR-613 / Malish 7).